The following is a 674-amino-acid chain: Acyl-coenzyme A oxidase acox-1.1 (674 aa).

Residues 149–152 (YAQT), 157–158 (GT), and G191 contribute to the FAD site. Residues 285–288 (KINY) and R295 contribute to the substrate site. FAD-binding positions include R320 and 340-343 (QQHR). Residues H342, S392, H396, and Q404 each coordinate ATP. Position 411 (G411) interacts with FAD. 433-434 (YE) lines the substrate pocket. E434 serves as the catalytic Proton acceptor. FAD is bound at residue E436. ATP-binding positions include 533-536 (RASR) and Y581. Positions 672–674 (SKL) match the Microbody targeting signal motif.

This sequence belongs to the acyl-CoA oxidase family. In terms of assembly, homodimer. Forms a heterodimer with acox-1.2. Forms a heterodimer with acox-1.3; the interaction may be important for the stability of acox-1.3. Requires FAD as cofactor. In terms of tissue distribution, expressed in hypodermis and intestine.

Its subcellular location is the peroxisome. The enzyme catalyses nonanoyl-CoA + O2 = (2E)-nonenoyl-CoA + H2O2. It catalyses the reaction dodecanoyl-CoA + O2 = (2E)-dodecenoyl-CoA + H2O2. The catalysed reaction is a 2,3-saturated acyl-CoA + O2 = a (2E)-enoyl-CoA + H2O2. It carries out the reaction heptanoyl-CoA + O2 = (2E)-heptenoyl-CoA + H2O2. The enzyme catalyses (8R)-8-hydroxynonanoyl-CoA + O2 = (2E,8R)-8-hydroxynonenoyl-CoA + H2O2. It catalyses the reaction pentanoyl-CoA + O2 = (2E)-pentenoyl-CoA + H2O2. The catalysed reaction is hexadecanoyl-CoA + O2 = (2E)-hexadecenoyl-CoA + H2O2. It carries out the reaction IC-asc-C7-CoA + O2 = IC-asc-DeltaC7-CoA + H2O2. The enzyme catalyses IC-asc-C9-CoA + O2 = IC-asc-DeltaC9-CoA + H2O2. It catalyses the reaction asc-omegaC5-CoA + O2 = asc-omegaDeltaC5-CoA + H2O2. The catalysed reaction is asc-C7-CoA + O2 = asc-DeltaC7-CoA + H2O2. It carries out the reaction asc-omegaC7-CoA + O2 = asc-omegaDeltaC7-CoA + H2O2. The enzyme catalyses asc-C9-CoA + O2 = asc-DeltaC9-CoA + H2O2. It catalyses the reaction asc-C13-CoA + O2 = asc-DeltaC13-CoA + H2O2. The protein operates within lipid metabolism; peroxisomal fatty acid beta-oxidation. Activated by ATP. ATP binding leads to a conformational change that promotes FAD cofactor binding and enzyme activity. ATP binding likely occurs during acox-1.1 folding and/or dimer formation. Functionally, involved in the first step of peroxisomal beta-oxidation by catalyzing the desaturation of fatty acid-derived side chains. Specifically, catalyzes the desaturation of fatty acids heptanoyl-CoA (C7), nonanoyl-CoA (C9), dodecanoyl-CoA (C12) and to a lesser extent pentanoyl-CoA (C5) and hexadecanoyl-CoA (C16), and hydroxylated fatty acid hydroxynonanoyl-CoA. Also, catalyzes the desaturation fatty acid-derived side chains of ascaroside pheromones, which regulates development and behavior. Specifically, shortens ascaroside with 5-carbon omega side chain (asc-omega-C5), 7-carbon side chain (asc-C7), 9-carbon side chain (asc-C9), 11-carbon side chain (asc-C11), 13-carbon side chain (asc-C13), 15-carbon side chain (asc-C15) and to a lesser extent ascarosides with 7-omega-carbon side chain (asc-omega-C7). Also shortens indol-3-carbonyl(IC)-ascarosides with 7-carbon side chain (IC-asc-C7) and to a lesser extent (IC)-ascarosides with 9-carbon side chain (IC-asc-C9). May associate and regulate the folding and/or the catalytic activity of other acyl-coenzyme A oxidases including acox-1.2, acox-1.3, acox-1.4 and acox-3 modulating the type of ascarosides produced. In association with acox-1.3, catalyzes the desaturation of asc-C7-CoA but not of fatty acids or hydroxylated fatty acids. Involved in the biosynthesis of asc-C6-MK (daumone 2) and asc-delta-C9 (daumone 3) but not asc-C7 (daumone 1); daumones are pheromones produced during unfavourable growth conditions which promote entry into the dauer stage. The sequence is that of Acyl-coenzyme A oxidase acox-1.1 from Caenorhabditis elegans.